An 873-amino-acid chain; its full sequence is MEGPEIKAVEAVIDNGSFGRRTVRFETGRLARQADGAVAAYLDDDSMVLSTTTAGSSPKENYDFFPLTVDVEEKMYAAGKIPGSFFRREGRPSSEAILACRIIDRPLRPLFPHTLRNEVQVVETVLAVNPEDSYDVLALNAASASTLISGLPFTGPVGGVRLALIDGQWVAFPRWSERERAVFEIVVAGRVVESGDVAIAMIEAGAGKNAWNLIYDEGQQKPDEEVVAGGLEAAKPFIKVLCDAQNELKRLAAKETREFTLFPEYTDDLYNRIDEIAHADLDEALSIAEKLPRQERIAEIKQRVKDTLSVEFTDMDEMEKDKEIGNAFKELQRQIVRRRILTQDYRIDGRGLRDIRTLSAEIDVVPRVHGSALFQRGETQILGITTLNMLKMEQQIDALSGPTTKRYMHNYEMPPYSTGETGRVGSPKRREIGHGALAEKAIVPVLPSREEFPYAIRQVSEAIGSNGSTSMGSVCASTLSLLAAGVPLKAPVAGIAMGLVSGDVDGQHIYKTLTDILGAEDAFGDMDFKVAGTADFITALQLDTKLDGIPADVLAGALKQAHEARKTILEVINECIDGPAEMSPFAPRIITTTVPVDKIGEVIGPKGKMINQIQEDTGAEIAIEDDGTVYISSEGGEAAEKAKQIIDEIANPHVPQAGETYKGTVVKTTSFGAFVNLTPGIDGLLHISQIRNLADGQRIDAVEDVLKEGDSVEVVVQGVDDRGKISLAIPGFENQENNAGGRRSDDRPRRDDRRHSDDRRRDDRPRRRSDDRDRDYDDRPRRRRDYDDDRDYDDRPRRRSHRDYDDDRDYDDRPRRSDRRRDYDDDRPRRRRNDDRNPRYVADENYDEYREGREVRHERPRRRVRRDFDPFDD.

Mg(2+) contacts are provided by Asp521 and Asp527. The region spanning 587-646 (PRIITTTVPVDKIGEVIGPKGKMINQIQEDTGAEIAIEDDGTVYISSEGGEAAEKAKQII) is the KH domain. One can recognise an S1 motif domain in the interval 658–730 (GETYKGTVVK…DRGKISLAIP (73 aa)). Residues 727–873 (LAIPGFENQE…VRRDFDPFDD (147 aa)) form a disordered region. Over residues 742–857 (RRSDDRPRRD…EYREGREVRH (116 aa)) the composition is skewed to basic and acidic residues.

The protein belongs to the polyribonucleotide nucleotidyltransferase family. The cofactor is Mg(2+).

It is found in the cytoplasm. The enzyme catalyses RNA(n+1) + phosphate = RNA(n) + a ribonucleoside 5'-diphosphate. In terms of biological role, involved in mRNA degradation. Catalyzes the phosphorolysis of single-stranded polyribonucleotides processively in the 3'- to 5'-direction. This is Polyribonucleotide nucleotidyltransferase from Bifidobacterium animalis subsp. lactis (strain AD011).